Consider the following 181-residue polypeptide: UPF0397 protein str0306 (181 aa).

The next 5 helical transmembrane spans lie at 11-31 (ATGI…IPIF), 45-65 (LFSV…GHAL), 72-92 (GNIS…IGLF), 109-129 (IWFN…VTPI), and 147-167 (FVAG…LLAI).

It belongs to the UPF0397 family.

The protein localises to the cell membrane. The polypeptide is UPF0397 protein str0306 (Streptococcus thermophilus (strain CNRZ 1066)).